The chain runs to 419 residues: UDP-N-acetylmuramoylalanine--D-glutamate ligase (419 aa).

ATP is bound at residue 109-115; sequence GSAGKTT.

It belongs to the MurCDEF family.

The protein resides in the cytoplasm. The enzyme catalyses UDP-N-acetyl-alpha-D-muramoyl-L-alanine + D-glutamate + ATP = UDP-N-acetyl-alpha-D-muramoyl-L-alanyl-D-glutamate + ADP + phosphate + H(+). It functions in the pathway cell wall biogenesis; peptidoglycan biosynthesis. Its function is as follows. Cell wall formation. Catalyzes the addition of glutamate to the nucleotide precursor UDP-N-acetylmuramoyl-L-alanine (UMA). The protein is UDP-N-acetylmuramoylalanine--D-glutamate ligase of Chlamydia caviae (strain ATCC VR-813 / DSM 19441 / 03DC25 / GPIC) (Chlamydophila caviae).